The following is a 103-amino-acid chain: Pyrimidine/purine nucleoside phosphorylase (103 aa).

Belongs to the nucleoside phosphorylase PpnP family.

It catalyses the reaction a purine D-ribonucleoside + phosphate = a purine nucleobase + alpha-D-ribose 1-phosphate. It carries out the reaction adenosine + phosphate = alpha-D-ribose 1-phosphate + adenine. The catalysed reaction is cytidine + phosphate = cytosine + alpha-D-ribose 1-phosphate. The enzyme catalyses guanosine + phosphate = alpha-D-ribose 1-phosphate + guanine. It catalyses the reaction inosine + phosphate = alpha-D-ribose 1-phosphate + hypoxanthine. It carries out the reaction thymidine + phosphate = 2-deoxy-alpha-D-ribose 1-phosphate + thymine. The catalysed reaction is uridine + phosphate = alpha-D-ribose 1-phosphate + uracil. The enzyme catalyses xanthosine + phosphate = alpha-D-ribose 1-phosphate + xanthine. In terms of biological role, catalyzes the phosphorolysis of diverse nucleosides, yielding D-ribose 1-phosphate and the respective free bases. Can use uridine, adenosine, guanosine, cytidine, thymidine, inosine and xanthosine as substrates. Also catalyzes the reverse reactions. The polypeptide is Pyrimidine/purine nucleoside phosphorylase (Shewanella sp. (strain MR-4)).